The primary structure comprises 232 residues: Orotidine 5'-phosphate decarboxylase (232 aa).

Substrate contacts are provided by residues Asp-16, Lys-38, 65 to 74, Thr-119, Arg-180, Gln-189, Gly-209, and Arg-210; that span reads DLKLHDIGNT. Lys-67 acts as the Proton donor in catalysis.

This sequence belongs to the OMP decarboxylase family. Type 1 subfamily. As to quaternary structure, homodimer.

The enzyme catalyses orotidine 5'-phosphate + H(+) = UMP + CO2. Its pathway is pyrimidine metabolism; UMP biosynthesis via de novo pathway; UMP from orotate: step 2/2. In terms of biological role, catalyzes the decarboxylation of orotidine 5'-monophosphate (OMP) to uridine 5'-monophosphate (UMP). The sequence is that of Orotidine 5'-phosphate decarboxylase from Methylorubrum populi (strain ATCC BAA-705 / NCIMB 13946 / BJ001) (Methylobacterium populi).